An 833-amino-acid chain; its full sequence is Neuronal tyrosine-phosphorylated phosphoinositide-3-kinase adapter 1 (833 aa).

5 disordered regions span residues 1–45 (MNLL…PGVR), 64–191 (PASQ…LQRL), 219–423 (VFRG…RELP), 645–674 (EEDG…PSGI), and 736–765 (HTPR…QPAR). Basic and acidic residues predominate over residues 8–25 (TKLEWRQHKEEEAKRSSS). The tract at residues 76–181 (STMAPRSLSC…DESCAPAPSP (106 aa)) is involved in CYFIP1- and NCKAP1-binding. Basic residues predominate over residues 111–120 (PPAKPRRHPS). The segment covering 162 to 171 (SPNTQLSVSF) has biased composition (polar residues). Over residues 220-239 (FRGGGRSGGGLAGPPLGSGG) the composition is skewed to gly residues. Over residues 248–257 (SDSEDSEAIY) the composition is skewed to acidic residues. The segment covering 275–285 (GPPPLTAPSPP) has biased composition (pro residues).

It belongs to the NYAP family. In terms of assembly, interacts with ACOT9, ARHGAP26 and PIK3R2. Interacts with components of the WAVE1 complex, CYFIP1 and NCKAP1; this interaction mediates PI3K-WAVE1 association and actin cytoskeleton remodeling. Post-translationally, phosphorylated on tyrosine residues by FYN upon stimulation with CNTN5. Phosphorylation begins at 14 dpc, reaches a peak during perinatal days in brain, then gradually decreases. Expressed predominantly in brain where it is present in the neurons, but not in astrocytes or oligodendrites.

Activates PI3K and concomitantly recruits the WAVE1 complex to the close vicinity of PI3K and regulates neuronal morphogenesis. This chain is Neuronal tyrosine-phosphorylated phosphoinositide-3-kinase adapter 1 (Nyap1), found in Mus musculus (Mouse).